The following is a 278-amino-acid chain: MAGNFWQSSHYLQWILDKERQKDLKFLSEEEYWKLQIFFTNVIQALGEHLKLRQQVIATATVYFKRFYARYSLKSIDPVLMAPTCVFLASKVEEFGVVSNTSLIAATTSVLKTRFSYASPKEFPYRMNHILECEFYLLELMDCCLIVYHPYRPLLQYVQDMGQEDVLLPLAWRIVNDTYRTDLCLLYPPFMIALACLHVACVVQQKDARQWFAELSVDMEKILEIIRVILKLYEQWKNFDERKEMATILSKMPKPKPPPNSEGEQGPNGSQNSSYSQS.

Residues 41 to 139 (NVIQALGEHL…ILECEFYLLE (99 aa)) form the Cyclin N-terminal domain. The segment at 247-278 (TILSKMPKPKPPPNSEGEQGPNGSQNSSYSQS) is disordered. A compositionally biased stretch (polar residues) spans 267 to 278 (PNGSQNSSYSQS). Phosphoserine is present on serine 270.

Belongs to the cyclin family. Cyclin C subfamily. Component of the Mediator complex, which is composed of MED1, MED4, MED6, MED7, MED8, MED9, MED10, MED11, MED12, MED13, MED13L, MED14, MED15, MED16, MED17, MED18, MED19, MED20, MED21, MED22, MED23, MED24, MED25, MED26, MED27, MED29, MED30, MED31, CCNC, CDK8 and CDC2L6/CDK11. The MED12, MED13, CCNC and CDK8 subunits form a distinct module termed the CDK8 module. Mediator containing the CDK8 module is less active than Mediator lacking this module in supporting transcriptional activation. Individual preparations of the Mediator complex lacking one or more distinct subunits have been variously termed ARC, CRSP, DRIP, PC2, SMCC and TRAP. The cylin/CDK pair formed by CCNC/CDK8 also associates with the large subunit of RNA polymerase II.

Its subcellular location is the nucleus. In terms of biological role, component of the Mediator complex, a coactivator involved in regulated gene transcription of nearly all RNA polymerase II-dependent genes. Mediator functions as a bridge to convey information from gene-specific regulatory proteins to the basal RNA polymerase II transcription machinery. Mediator is recruited to promoters by direct interactions with regulatory proteins and serves as a scaffold for the assembly of a functional preinitiation complex with RNA polymerase II and the general transcription factors. Binds to and activates cyclin-dependent kinase CDK8 that phosphorylates the CTD (C-terminal domain) of the large subunit of RNA polymerase II (RNAp II), which may inhibit the formation of a transcription initiation complex. This chain is Cyclin-C (Ccnc), found in Rattus norvegicus (Rat).